The chain runs to 363 residues: Palmitoyltransferase ZDHHC9 (363 aa).

The Cytoplasmic portion of the chain corresponds to methionine 1–lysine 35. Residues glycine 36–glutamate 56 form a helical membrane-spanning segment. The Lumenal portion of the chain corresponds to cysteine 57–glutamine 63. Residues leucine 64–leucine 84 traverse the membrane as a helical segment. The Cytoplasmic portion of the chain corresponds to arginine 85–tyrosine 183. One can recognise a DHHC domain in the interval lysine 139 to leucine 189. The S-palmitoyl cysteine intermediate role is filled by cysteine 169. A helical transmembrane segment spans residues phenylalanine 184 to valine 204. The Lumenal segment spans residues tyrosine 205 to glutamate 228. Residues valine 229–leucine 249 form a helical membrane-spanning segment. The Cytoplasmic segment spans residues valine 250 to lysine 363. Residues proline 303–lysine 363 form a disordered region. Residues arginine 310–leucine 322 show a composition bias toward polar residues. The segment covering glutamate 345–proline 355 has biased composition (pro residues).

The protein belongs to the DHHC palmitoyltransferase family. ERF2/ZDHHC9 subfamily. As to quaternary structure, interacts with GOLGA7.

It localises to the endoplasmic reticulum membrane. The protein localises to the golgi apparatus membrane. It catalyses the reaction L-cysteinyl-[protein] + hexadecanoyl-CoA = S-hexadecanoyl-L-cysteinyl-[protein] + CoA. Its function is as follows. Palmitoyltransferase that catalyzes the addition of palmitate onto various protein substrates, such as ADRB2, GSDMD, HRAS, NRAS and CGAS. The ZDHHC9-GOLGA7 complex is a palmitoyltransferase specific for HRAS and NRAS. May have a palmitoyltransferase activity toward the beta-2 adrenergic receptor/ADRB2 and therefore regulate G protein-coupled receptor signaling. Acts as a regulator of innate immunity by catalyzing palmitoylation of CGAS, thereby promoting CGAS homodimerization and cyclic GMP-AMP synthase activity. Activates pyroptosis by catalyzing palmitoylation of gasdermin-D (GSDMD), thereby promoting membrane translocation and pore formation of GSDMD. This chain is Palmitoyltransferase ZDHHC9 (ZDHHC9), found in Bos taurus (Bovine).